The sequence spans 101 residues: Large ribosomal subunit protein uL23 (101 aa).

The protein belongs to the universal ribosomal protein uL23 family. Part of the 50S ribosomal subunit. Contacts protein L29, and trigger factor when it is bound to the ribosome.

One of the early assembly proteins it binds 23S rRNA. One of the proteins that surrounds the polypeptide exit tunnel on the outside of the ribosome. Forms the main docking site for trigger factor binding to the ribosome. In Pseudarthrobacter chlorophenolicus (strain ATCC 700700 / DSM 12829 / CIP 107037 / JCM 12360 / KCTC 9906 / NCIMB 13794 / A6) (Arthrobacter chlorophenolicus), this protein is Large ribosomal subunit protein uL23.